The primary structure comprises 211 residues: Octanoyltransferase (211 aa).

In terms of domain architecture, BPL/LPL catalytic spans 32–207 (PCTYDEIWFV…ELSKFLEIFI (176 aa)). Residues 71–78 (RGGQITYH), 138–140 (SLG), and 151–153 (GLA) contribute to the substrate site. The active-site Acyl-thioester intermediate is cysteine 169.

This sequence belongs to the LipB family.

The protein localises to the cytoplasm. It catalyses the reaction octanoyl-[ACP] + L-lysyl-[protein] = N(6)-octanoyl-L-lysyl-[protein] + holo-[ACP] + H(+). It participates in protein modification; protein lipoylation via endogenous pathway; protein N(6)-(lipoyl)lysine from octanoyl-[acyl-carrier-protein]: step 1/2. In terms of biological role, catalyzes the transfer of endogenously produced octanoic acid from octanoyl-acyl-carrier-protein onto the lipoyl domains of lipoate-dependent enzymes. Lipoyl-ACP can also act as a substrate although octanoyl-ACP is likely to be the physiological substrate. This is Octanoyltransferase from Buchnera aphidicola subsp. Acyrthosiphon pisum (strain APS) (Acyrthosiphon pisum symbiotic bacterium).